The sequence spans 382 residues: 3-phytase (382 aa).

Residues M1 to A26 form the signal peptide. A BPP domain is found at H27–L361.

The protein resides in the secreted. It carries out the reaction 1D-myo-inositol hexakisphosphate + H2O = 1D-myo-inositol 1,2,4,5,6-pentakisphosphate + phosphate. The polypeptide is 3-phytase (phy) (Bacillus subtilis (strain 168)).